We begin with the raw amino-acid sequence, 363 residues long: NAD(P)H-quinone oxidoreductase subunit 1, chloroplastic (363 aa).

A run of 7 helical transmembrane segments spans residues Phe30–Leu50, Ile104–Leu124, Ile129–Gly149, Tyr248–Ser268, Leu269–Phe289, Val300–Ile320, and Leu336–Thr356.

The protein belongs to the complex I subunit 1 family. As to quaternary structure, NDH is composed of at least 16 different subunits, 5 of which are encoded in the nucleus.

It localises to the plastid. Its subcellular location is the chloroplast thylakoid membrane. It catalyses the reaction a plastoquinone + NADH + (n+1) H(+)(in) = a plastoquinol + NAD(+) + n H(+)(out). The enzyme catalyses a plastoquinone + NADPH + (n+1) H(+)(in) = a plastoquinol + NADP(+) + n H(+)(out). Functionally, NDH shuttles electrons from NAD(P)H:plastoquinone, via FMN and iron-sulfur (Fe-S) centers, to quinones in the photosynthetic chain and possibly in a chloroplast respiratory chain. The immediate electron acceptor for the enzyme in this species is believed to be plastoquinone. Couples the redox reaction to proton translocation, and thus conserves the redox energy in a proton gradient. This is NAD(P)H-quinone oxidoreductase subunit 1, chloroplastic from Morus indica (Mulberry).